We begin with the raw amino-acid sequence, 152 residues long: uncharacterized protein (152 aa).

4 consecutive transmembrane segments (helical) span residues 2-22 (ENLI…LSFL), 26-46 (FITF…HLIE), 92-112 (VVPI…FILL), and 128-148 (YIIT…YFLK).

It is found in the membrane. This is an uncharacterized protein from Acanthamoeba polyphaga mimivirus (APMV).